We begin with the raw amino-acid sequence, 253 residues long: MAGHSKWANIQHRKGRQDKLRSKLFSRLSKEISIAAKLGGPDVDANPRLRLAVSNAKGQSMPKDNIQRAIDKASGGDDESFEDIRYEGFGPAGIGVIVEVSTDNKNRAAAEVRTAFAKNGGNLGETGSVAFMFDNVGEIRYPLSKADEDTMMEAAIEAGAEDVASEPGDEDNEGEHVIYTAREDLMEVVGGLSATFEDPSSAKLIWRPQNLIEVTGDKVATLMKMMEMLEDSDDVQNVYANFDISDEDMAQLD.

It belongs to the TACO1 family.

It is found in the cytoplasm. The polypeptide is Probable transcriptional regulatory protein Mmar10_2433 (Maricaulis maris (strain MCS10) (Caulobacter maris)).